We begin with the raw amino-acid sequence, 146 residues long: Core protein OPG114 (146 aa).

The protein belongs to the orthopoxvirus OPG114 family. In terms of assembly, part of a complex composed of the kinase OPG054, OPG092, OPG100, OPG114, OPG115, OPG142 and OPG157.

It localises to the virion. Its function is as follows. Late protein which is part of a large complex required for early virion morphogenesis. This complex participates in the formation of virosomes and the incorporation of virosomal contents into nascent immature virions. In Vaccinia virus (strain Western Reserve) (VACV), this protein is Core protein OPG114 (OPG114).